A 234-amino-acid polypeptide reads, in one-letter code: Sugar fermentation stimulation protein A (234 aa).

Positions Leu201–Ser220 form a DNA-binding region, H-T-H motif.

This sequence belongs to the SfsA family.

Binds to DNA non-specifically. Could be a regulatory factor involved in maltose metabolism. In Salmonella dublin (strain CT_02021853), this protein is Sugar fermentation stimulation protein A.